A 464-amino-acid chain; its full sequence is Forkhead box protein N3 (464 aa).

2 disordered regions span residues 1–53 (MGPI…EKGG) and 85–108 (PVQD…DAKQ). Positions 14–30 (TGISVSSQCYRSSTLSN) are enriched in polar residues. The fork-head DNA-binding region spans 113–209 (KPPYSFSCLI…QALKKTPYHP (97 aa)). Disordered stretches follow at residues 294-337 (MESE…SSSA) and 381-428 (LVES…MKEA). A compositionally biased stretch (low complexity) spans 316 to 336 (SSAKSANKRSSSPSDSISSSS). The segment covering 389–401 (QHKKKQHLLKLRR) has biased composition (basic residues).

It is found in the nucleus. In terms of biological role, acts as a transcriptional repressor. May be involved in DNA damage-inducible cell cycle arrests (checkpoints). In Xenopus tropicalis (Western clawed frog), this protein is Forkhead box protein N3.